The sequence spans 106 residues: Large ribosomal subunit protein eL30 (106 aa).

Belongs to the eukaryotic ribosomal protein eL30 family.

This is Large ribosomal subunit protein eL30 from Methanococcus maripaludis (strain C7 / ATCC BAA-1331).